Reading from the N-terminus, the 213-residue chain is MQISDRLSSSTAPILNLPVRRASVKRKTGETDVTVNLNLDGVGNCQANTGIPFLDHMLHQISSHGLIDLDVQAVGDIEIDDHHTNEDVGITLGQALKQALGDRKGIVRFGHFLAPLDEALVEVALDFSGRPHLSYGLEMPTQRVGNYDTQLVREFFVALANNSLMTLHIRQLGGINSHHIIEAGFKAFARSLRMATEIDPRRVGEIPSSKGVL.

It belongs to the imidazoleglycerol-phosphate dehydratase family.

Its subcellular location is the cytoplasm. It catalyses the reaction D-erythro-1-(imidazol-4-yl)glycerol 3-phosphate = 3-(imidazol-4-yl)-2-oxopropyl phosphate + H2O. Its pathway is amino-acid biosynthesis; L-histidine biosynthesis; L-histidine from 5-phospho-alpha-D-ribose 1-diphosphate: step 6/9. This Trichodesmium erythraeum (strain IMS101) protein is Imidazoleglycerol-phosphate dehydratase.